Consider the following 745-residue polypeptide: Pheromone-processing carboxypeptidase KEX1 (745 aa).

Positions 1-47 (MSHFKYRNQTTDICNAAALDAFAMYSNYSVPLALLFALLLSFQTARA) are cleaved as a signal peptide. Topologically, residues 48–655 (LKAADEYAVS…DDDHNSGSHL (608 aa)) are lumenal. Active-site residues include serine 214 and aspartate 418. Residues asparagine 471 and asparagine 479 are each glycosylated (N-linked (GlcNAc...) asparagine). Histidine 482 is a catalytic residue. Positions 515-526 (ITDDVNKGKDGD) are enriched in basic and acidic residues. Residues 515–651 (ITDDVNKGKD…AEDEDDDHNS (137 aa)) form a disordered region. Positions 527 to 537 (ASETDDTTELD) are enriched in acidic residues. The span at 538–549 (CEGKDKLSEECK) shows a compositional bias: basic and acidic residues. The N-linked (GlcNAc...) asparagine glycan is linked to asparagine 552. 2 stretches are compositionally biased toward acidic residues: residues 570-579 (NEEDDNDDTE) and 587-629 (DEKD…DDDK). Residues 630–640 (DGDKPEGKNND) show a composition bias toward basic and acidic residues. The chain crosses the membrane as a helical span at residues 656–676 (AVTMICLLVSGTIIGGLYFTF). The Cytoplasmic portion of the chain corresponds to 677 to 745 (RDRFRPRLRA…SRDSFELDNL (69 aa)). The segment at 709–745 (EQDAADLSNPENGAKKKGPYTSVPTQESRDSFELDNL) is disordered. The span at 735–745 (ESRDSFELDNL) shows a compositional bias: basic and acidic residues.

The protein belongs to the peptidase S10 family.

The protein localises to the golgi apparatus. It localises to the trans-Golgi network membrane. The enzyme catalyses Preferential release of a C-terminal arginine or lysine residue.. Its function is as follows. Protease with a carboxypeptidase B-like function involved in the C-terminal processing of the lysine and arginine residues from protein precursors. Promotes cell fusion and is involved in the programmed cell death. The protein is Pheromone-processing carboxypeptidase KEX1 (KEX1) of Lachancea thermotolerans (strain ATCC 56472 / CBS 6340 / NRRL Y-8284) (Yeast).